We begin with the raw amino-acid sequence, 299 residues long: Tyrosine recombinase XerC (299 aa).

A Core-binding (CB) domain is found at 1–85 (MERQLEAYCA…AVRGLYRYLN (85 aa)). The Tyr recombinase domain occupies 106–285 (RLPKVLDTDR…DFQHLAAVYD (180 aa)). Residues R146, K170, H237, R240, and H263 contribute to the active site. Residue Y272 is the O-(3'-phospho-DNA)-tyrosine intermediate of the active site.

It belongs to the 'phage' integrase family. XerC subfamily. Forms a cyclic heterotetrameric complex composed of two molecules of XerC and two molecules of XerD.

Its subcellular location is the cytoplasm. Its function is as follows. Site-specific tyrosine recombinase, which acts by catalyzing the cutting and rejoining of the recombining DNA molecules. The XerC-XerD complex is essential to convert dimers of the bacterial chromosome into monomers to permit their segregation at cell division. It also contributes to the segregational stability of plasmids. The protein is Tyrosine recombinase XerC of Pseudomonas putida (strain W619).